Reading from the N-terminus, the 445-residue chain is Putative aldehyde dehydrogenase AldX (445 aa).

Catalysis depends on residues Glu-214 and Cys-248.

It belongs to the aldehyde dehydrogenase family.

The enzyme catalyses an aldehyde + NAD(+) + H2O = a carboxylate + NADH + 2 H(+). The polypeptide is Putative aldehyde dehydrogenase AldX (aldX) (Bacillus subtilis (strain 168)).